Here is a 273-residue protein sequence, read N- to C-terminus: Small ribosomal subunit protein uS3 (273 aa).

The region spanning 40 to 110 is the KH type-2 domain; the sequence is IRNLFFVNYR…NLDLTINEIG (71 aa). The segment covering 244–265 has biased composition (polar residues); sequence QVLSANKLTGSDVETSSIQALT. The interval 244–273 is disordered; sequence QVLSANKLTGSDVETSSIQALTKPNKEDKQ.

Belongs to the universal ribosomal protein uS3 family. As to quaternary structure, part of the 30S ribosomal subunit. Forms a tight complex with proteins S10 and S14.

Functionally, binds the lower part of the 30S subunit head. Binds mRNA in the 70S ribosome, positioning it for translation. This chain is Small ribosomal subunit protein uS3, found in Mycoplasma pneumoniae (strain ATCC 29342 / M129 / Subtype 1) (Mycoplasmoides pneumoniae).